The following is a 415-amino-acid chain: ATP-dependent Clp protease ATP-binding subunit ClpX (415 aa).

In terms of domain architecture, ClpX-type ZB spans 1–53 (MLRSKGDLVLGCSFCGKKEDERRRIVTGHGVSICNYCVERCAEYLRDRKPSAL). Zn(2+) contacts are provided by C12, C15, C34, and C37. Position 118-125 (118-125 (PTGSGKTL)) interacts with ATP.

Belongs to the ClpX chaperone family. As to quaternary structure, component of the ClpX-ClpP complex. Forms a hexameric ring that, in the presence of ATP, binds to fourteen ClpP subunits assembled into a disk-like structure with a central cavity, resembling the structure of eukaryotic proteasomes.

Functionally, ATP-dependent specificity component of the Clp protease. It directs the protease to specific substrates. Can perform chaperone functions in the absence of ClpP. The sequence is that of ATP-dependent Clp protease ATP-binding subunit ClpX from Treponema pallidum (strain Nichols).